Here is a 494-residue protein sequence, read N- to C-terminus: GTPase Der (494 aa).

EngA-type G domains are found at residues 2–164 (KKIA…PEED) and 235–407 (IKIS…KNYS). Residues 8-15 (GRPNVGKS), 55-59 (DTGGL), 116-119 (NKID), 241-248 (GRTNVGKS), 288-292 (DTAGL), and 352-355 (NKWD) contribute to the GTP site. The KH-like domain maps to 408 to 492 (QHIKTSELNV…PVLFKAKKRG (85 aa)).

This sequence belongs to the TRAFAC class TrmE-Era-EngA-EngB-Septin-like GTPase superfamily. EngA (Der) GTPase family. In terms of assembly, associates with the 50S ribosomal subunit.

GTPase that plays an essential role in the late steps of ribosome biogenesis. In Sulfurimonas denitrificans (strain ATCC 33889 / DSM 1251) (Thiomicrospira denitrificans (strain ATCC 33889 / DSM 1251)), this protein is GTPase Der.